Consider the following 62-residue polypeptide: U-myrmeciitoxin(01)-Mg3a (62 aa).

The signal sequence occupies residues 1–24; the sequence is MKTTVILLLAIAIIFAIMTTLTSA.

As to expression, expressed by the venom gland.

The protein localises to the secreted. Its function is as follows. May have antimicrobial properties, like most ant linear peptides. This Myrmecia gulosa (Red bulldog ant) protein is U-myrmeciitoxin(01)-Mg3a.